A 123-amino-acid polypeptide reads, in one-letter code: Ribosome-binding factor A (123 aa).

Belongs to the RbfA family. In terms of assembly, monomer. Binds 30S ribosomal subunits, but not 50S ribosomal subunits or 70S ribosomes.

Its subcellular location is the cytoplasm. In terms of biological role, one of several proteins that assist in the late maturation steps of the functional core of the 30S ribosomal subunit. Associates with free 30S ribosomal subunits (but not with 30S subunits that are part of 70S ribosomes or polysomes). Required for efficient processing of 16S rRNA. May interact with the 5'-terminal helix region of 16S rRNA. The sequence is that of Ribosome-binding factor A from Magnetococcus marinus (strain ATCC BAA-1437 / JCM 17883 / MC-1).